The chain runs to 623 residues: Prothrombin (623 aa).

Positions 1-24 (MAHVGGLWLHGCLALAVLVSLVHS) are cleaved as a signal peptide. The propeptide occupies 25 to 43 (QHVFMAPQQALSLLQRARR). The region spanning 44–90 (ANSGFFEEMRKGNLERECVEEQCSREEAYEALESPSETDAFWAKYTA) is the Gla domain. 4-carboxyglutamate occurs at positions 50, 51, 58, 60, 63, 64, 69, 70, 73, and 76. Residues Cys-61 and Cys-66 are joined by a disulfide bond. Disulfide bonds link Cys-91–Cys-104, Cys-109–Cys-187, Cys-130–Cys-170, Cys-158–Cys-182, Cys-214–Cys-292, Cys-235–Cys-275, Cys-263–Cys-287, Cys-337–Cys-483, Cys-392–Cys-408, Cys-537–Cys-551, and Cys-565–Cys-595. Kringle domains are found at residues 108 to 187 (NCAE…IPVC) and 213 to 292 (TCVP…LDYC). N-linked (GlcNAc...) asparagine glycosylation is found at Asn-120 and Asn-144. Residues 365-619 (IVEGSDAEIG…LKKWMQKVID (255 aa)) enclose the Peptidase S1 domain. Catalysis depends on His-407, which acts as the Charge relay system. N-linked (GlcNAc...) asparagine glycosylation occurs at Asn-417. The active-site Charge relay system is Asp-463. The tract at residues 552–574 (AGYKPDEGKRGDACEGDSGGPFV) is high affinity receptor-binding region which is also known as the TP508 peptide. The active-site Charge relay system is the Ser-569.

This sequence belongs to the peptidase S1 family. Heterodimer (named alpha-thrombin) of a light and a heavy chain; disulfide-linked. Forms a heterodimer with SERPINA5. In plasma, interacts (via N-terminus) with alpha-1-microglobulin; this interaction does not prevent the activation of prothrombin to thrombin. In terms of processing, the gamma-carboxyglutamyl residues, which bind calcium ions, result from the carboxylation of glutamyl residues by a microsomal enzyme, the vitamin K-dependent carboxylase. The modified residues are necessary for the calcium-dependent interaction with a negatively charged phospholipid surface, which is essential for the conversion of prothrombin to thrombin. Post-translationally, in the penultimate step of the coagulation cascade, prothrombin is converted to thrombin by the prothrombinase complex composed of factor Xa (F10), cofactor Va (F5), and phospholipids. This activation requires factor Xa-catalyzed sequential cleavage at 2 sites, Arg-315 and Arg-364, along 2 possible pathways. In the first pathway, the first cleavage occurs at Arg-315, leading to the formation of the inactive intermediate prethrombin-2. This pathway preferentially occurs on platelets and in the absence of cofactor Va. In the second pathway, the first cleavage occurs at Arg-364, which separates protease domain into 2 chains that remain connected through a disulfide bond and generates the active intermediate meizothrombin. The presence of cofactor Va directs activation along the meizothrombin pathway and greatly accelerates the rate of cleavage at Arg-364, but has a smaller effect on the cleavage of meizothrombin at Arg-315. Meizothrombin accumulates as an intermediate when prothrombinase is assembled on the membrane of red blood cells.

It carries out the reaction Selective cleavage of Arg-|-Gly bonds in fibrinogen to form fibrin and release fibrinopeptides A and B.. Its activity is regulated as follows. Activity is promoted in the presence of negatively charged surfaces, such as polyphosphate and dextran sulfate. Inhibited by SERPINA5. In terms of biological role, thrombin, which cleaves bonds after Arg and Lys, converts fibrinogen to fibrin and activates factors V, VII, VIII, XIII, and, in complex with thrombomodulin, protein C. Functions in blood homeostasis, inflammation and wound healing. Activates coagulation factor XI (F11); activation is promoted by the contact with negatively charged surfaces. Triggers the production of pro-inflammatory cytokines, such as MCP-1/CCL2 and IL8/CXCL8, in endothelial cells. This is Prothrombin (F2) from Sus scrofa (Pig).